The sequence spans 103 residues: uncharacterized protein (103 aa).

Residues proline 35 to tyrosine 57 traverse the membrane as a helical segment.

Its subcellular location is the host membrane. This is an uncharacterized protein from Acidianus bottle-shaped virus (isolate Italy/Pozzuoli) (ABV).